Here is a 131-residue protein sequence, read N- to C-terminus: MFANIGWWEMLVLVMVGLVVLGPERLPGAIRWAASALRQARDYLSGVTSQLREDIGPEFDDLRGHLGELQKLRGMTPRAALTKHLLDGDDSLFTGDFDRPTPKKPDAAGSAGPDATEQIGAGPIPFDSDAT.

The chain crosses the membrane as a helical span at residues phenylalanine 2–glycine 22. Residues aspartate 90–threonine 131 are disordered. Positions aspartate 96–aspartate 106 are enriched in basic and acidic residues.

It belongs to the TatB family. As to quaternary structure, the Tat system comprises two distinct complexes: a TatABC complex, containing multiple copies of TatA, TatB and TatC subunits, and a separate TatA complex, containing only TatA subunits. Substrates initially bind to the TatABC complex, which probably triggers association of the separate TatA complex to form the active translocon.

The protein localises to the cell membrane. Part of the twin-arginine translocation (Tat) system that transports large folded proteins containing a characteristic twin-arginine motif in their signal peptide across membranes. Together with TatC, TatB is part of a receptor directly interacting with Tat signal peptides. TatB may form an oligomeric binding site that transiently accommodates folded Tat precursor proteins before their translocation. This Mycobacterium tuberculosis (strain ATCC 25177 / H37Ra) protein is Sec-independent protein translocase protein TatB.